The following is a 378-amino-acid chain: Circumsporozoite protein (378 aa).

The N-terminal stretch at 1 to 22 is a signal peptide; the sequence is MKNFNLLVVSSILLVDLFPTNC. Positions 50–288 are disordered; the sequence is AQVRQSASRG…AGAGQGQNNE (239 aa). The span at 65–93 shows a compositional bias: basic and acidic residues; that stretch reads NPKDEEGADKPKKKEEKKVEPKKPRENKL. The required for the binding to heparan sulfate proteoglycans (HSPGs) on the surface of host hepatocytes stretch occupies residues 81–89; that stretch reads KKVEPKKPR. The tract at residues 92–96 is region I; contains the proteolytic cleavage site; the sequence is KLKQP. Over residues 96–203 the composition is skewed to low complexity; that stretch reads PPAGDGAPEG…RAGGQPAAGG (108 aa). Residues 97 to 102 form a 1-1; truncated repeat; it reads PAGDGA. An 11 X 9 AA tandem repeats of P-[AE]-G-D-G-A-P-A-[AG] region spans residues 97–191; it reads PAGDGAPEGD…AAPAGDGAPA (95 aa). 13 repeat units span residues 103 to 111, 112 to 120, 121 to 129, 130 to 138, 139 to 147, 148 to 156, 157 to 165, 166 to 174, 175 to 183, 184 to 191, 193 to 208, 209 to 224, and 225 to 240. The tract at residues 193–268 is 6 X 16 AA approximate tandem repeats of N-R-A-G-G-Q-P-A-A-G-G-N-Q-A-G-G; sequence NRAGGQPAAG…GAQAGGANAG (76 aa). A compositionally biased stretch (low complexity) spans 228 to 251; sequence GGQPAAGGNQAGGQPAAGGNQAGA. A 2-4; approximate; truncated repeat occupies 241 to 251; it reads QPAAGGNQAGA. A 2-5; approximate; truncated repeat occupies 252 to 260; the sequence is QAGGNQAGA. Gly residues-rich tracts occupy residues 252–266 and 274–283; these read QAGGNQAGAQAGGAN and EAGGNAGAGQ. The stretch at 261–268 is one 2-6; approximate; truncated repeat; it reads QAGGANAG. A TSP type-1 domain is found at 304–356; the sequence is KIRSTLGVEWSPCSVTCGKGVRMRRKVSAANKKPEELDVNDLETEVCTMDKCA. 2 disulfide bridges follow: cysteine 316–cysteine 350 and cysteine 320–cysteine 355. Threonine 319 carries an O-linked (Fuc) threonine glycan. Residue cysteine 355 is the site of GPI-anchor amidated cysteine attachment. A propeptide spans 356-378 (removed in mature form); that stretch reads AGIFNVVSNSLRLVILLVLALFN.

The protein belongs to the plasmodium circumsporozoite protein family. Post-translationally, during host cell invasion, proteolytically cleaved at the cell membrane in the region I by a papain-like cysteine protease of parasite origin. Cleavage is triggered by the sporozoite contact with highly sulfated heparan sulfate proteoglycans (HSPGs) present on the host hepatocyte cell surface. Cleavage exposes the TSP type-1 (TSR) domain and is required for productive invasion of host hepatocytes but not for adhesion to the host cell membrane. Cleavage is dispensable for sporozoite development in the oocyst, motility and for traversal of host and vector cells. In terms of processing, O-glycosylated; maybe by POFUT2.

It is found in the cell membrane. Its subcellular location is the cytoplasm. In terms of biological role, essential sporozoite protein. In the mosquito vector, required for sporozoite development in the oocyst, migration through the vector hemolymph and entry into the vector salivary glands. In the vertebrate host, required for sporozoite migration through the host dermis and infection of host hepatocytes. Binds to highly sulfated heparan sulfate proteoglycans (HSPGs) on the surface of host hepatocytes. In the vertebrate host, binds to highly sulfated heparan sulfate proteoglycans (HSPGs) on the surface of host hepatocytes and is required for sporozoite invasion of the host hepatocytes. The polypeptide is Circumsporozoite protein (Plasmodium cynomolgi (strain Berok)).